The primary structure comprises 716 residues: Phospholipid phosphatase-related protein type 3 (716 aa).

3 consecutive transmembrane segments (helical) span residues 18–38 (LPCFYFVELPIVASSVVSLYF), 70–90 (LIPLLMLLSLAFAAPAASIMV), and 131–151 (FVGVHVFGLCATALVTDVIQL). Residue N167 is glycosylated (N-linked (GlcNAc...) asparagine). 3 consecutive transmembrane segments (helical) span residues 205–225 (HATLSAFAAVYVSMYFNSVIS), 231–251 (LKPILVFAFAIAAGVCGLTQI), and 261–281 (VYAGFLIGAGIAAYLACHAVG). Residues 311–334 (SMYQQNKSVSTDELGPPGRLEGVP) form a disordered region. A compositionally biased stretch (polar residues) spans 312 to 321 (MYQQNKSVST). An N-linked (GlcNAc...) asparagine glycan is attached at N316. A phosphoserine mark is found at S320 and S351. T374 is modified (phosphothreonine). The disordered stretch occupies residues 416–488 (GRGLGLPDEA…RVILPPRPGP (73 aa)). At S426 the chain carries Phosphoserine. Residues 437 to 460 (VAEEEEEEEEEEEEEEEEEEEEEG) show a composition bias toward acidic residues. S506 carries the post-translational modification Phosphoserine. Positions 548-589 (AMSKAAGGPKAETASSSSASSDSSQYRSPSDRDSASIVTIDA) are disordered. Low complexity predominate over residues 562–575 (SSSSASSDSSQYRS). At S641 the chain carries Phosphoserine. Residues 664–694 (GEGLPPPGASEGALGAGSRESTLRRQVGALG) are disordered.

This sequence belongs to the PA-phosphatase related phosphoesterase family.

The protein localises to the membrane. The sequence is that of Phospholipid phosphatase-related protein type 3 from Rattus norvegicus (Rat).